The chain runs to 826 residues: Leucine--tRNA ligase (826 aa).

The 'HIGH' region signature appears at proline 42–histidine 52. The 'KMSKS' region motif lies at lysine 581–serine 585. Lysine 584 contributes to the ATP binding site.

The protein belongs to the class-I aminoacyl-tRNA synthetase family.

Its subcellular location is the cytoplasm. The catalysed reaction is tRNA(Leu) + L-leucine + ATP = L-leucyl-tRNA(Leu) + AMP + diphosphate. This Desulforudis audaxviator (strain MP104C) protein is Leucine--tRNA ligase.